Reading from the N-terminus, the 957-residue chain is Glycine dehydrogenase (decarboxylating) (957 aa).

At K708 the chain carries N6-(pyridoxal phosphate)lysine.

Belongs to the GcvP family. In terms of assembly, the glycine cleavage system is composed of four proteins: P, T, L and H. It depends on pyridoxal 5'-phosphate as a cofactor.

It catalyses the reaction N(6)-[(R)-lipoyl]-L-lysyl-[glycine-cleavage complex H protein] + glycine + H(+) = N(6)-[(R)-S(8)-aminomethyldihydrolipoyl]-L-lysyl-[glycine-cleavage complex H protein] + CO2. Its function is as follows. The glycine cleavage system catalyzes the degradation of glycine. The P protein binds the alpha-amino group of glycine through its pyridoxal phosphate cofactor; CO(2) is released and the remaining methylamine moiety is then transferred to the lipoamide cofactor of the H protein. The chain is Glycine dehydrogenase (decarboxylating) from Escherichia coli (strain K12 / MC4100 / BW2952).